Reading from the N-terminus, the 691-residue chain is Guanylate cyclase soluble subunit alpha-1 (691 aa).

The segment at proline 26–threonine 65 is disordered. Positions threonine 482–glutamate 609 constitute a Guanylate cyclase domain.

It belongs to the adenylyl cyclase class-4/guanylyl cyclase family. In terms of assembly, heterodimer of an alpha and a beta chain.

The protein localises to the cytoplasm. The catalysed reaction is GTP = 3',5'-cyclic GMP + diphosphate. With respect to regulation, activated by nitric oxide in the presence of magnesium or manganese ions. In Bos taurus (Bovine), this protein is Guanylate cyclase soluble subunit alpha-1 (GUCY1A1).